The primary structure comprises 293 residues: Ribosomal protein L11 methyltransferase (293 aa).

Residues threonine 145, glycine 166, aspartate 188, and asparagine 230 each contribute to the S-adenosyl-L-methionine site.

This sequence belongs to the methyltransferase superfamily. PrmA family.

The protein resides in the cytoplasm. It carries out the reaction L-lysyl-[protein] + 3 S-adenosyl-L-methionine = N(6),N(6),N(6)-trimethyl-L-lysyl-[protein] + 3 S-adenosyl-L-homocysteine + 3 H(+). In terms of biological role, methylates ribosomal protein L11. This Mannheimia succiniciproducens (strain KCTC 0769BP / MBEL55E) protein is Ribosomal protein L11 methyltransferase.